The following is a 338-amino-acid chain: tRNA N6-adenosine threonylcarbamoyltransferase (338 aa).

Fe cation contacts are provided by H111 and H115. Substrate is bound by residues 134–138, D167, G180, and N272; that span reads LVSGG. D300 contributes to the Fe cation binding site.

Belongs to the KAE1 / TsaD family. It depends on Fe(2+) as a cofactor.

It localises to the cytoplasm. It carries out the reaction L-threonylcarbamoyladenylate + adenosine(37) in tRNA = N(6)-L-threonylcarbamoyladenosine(37) in tRNA + AMP + H(+). In terms of biological role, required for the formation of a threonylcarbamoyl group on adenosine at position 37 (t(6)A37) in tRNAs that read codons beginning with adenine. Is involved in the transfer of the threonylcarbamoyl moiety of threonylcarbamoyl-AMP (TC-AMP) to the N6 group of A37, together with TsaE and TsaB. TsaD likely plays a direct catalytic role in this reaction. The chain is tRNA N6-adenosine threonylcarbamoyltransferase from Shewanella halifaxensis (strain HAW-EB4).